The primary structure comprises 332 residues: Probable allantoicase (332 aa).

This sequence belongs to the allantoicase family.

It carries out the reaction allantoate + H2O = (S)-ureidoglycolate + urea. The protein operates within nitrogen metabolism; (S)-allantoin degradation; (S)-ureidoglycolate from allantoate (aminidohydrolase route): step 1/1. The chain is Probable allantoicase from Pseudomonas paraeruginosa (strain DSM 24068 / PA7) (Pseudomonas aeruginosa (strain PA7)).